Consider the following 389-residue polypeptide: Flavin-dependent monooxygenase (389 aa).

Residues 12-15 (AGVA), 34-35 (EK), glutamine 44, arginine 105, tyrosine 267, and aspartate 289 each bind FAD.

It belongs to the aromatic-ring hydroxylase family. The cofactor is FAD.

The enzyme catalyses a tetracycline + NADPH + O2 + H(+) = a (1S,10aS)-3-(CONH2)-1-(Me2N)-3,3a,4,6-(HO)4-2,5-dioxo-1H,10aH,11H,11aH-cyclopenta[b]anthracene + CO + NADP(+) + H2O. It catalyses the reaction 7-chlorotetracycline + NADPH + O2 + H(+) = (1S,10S,10aS)-3-(CONH2)-9-Cl-1-(Me2N)-3,3a,4,10-(HO)4-10-Me-2,5-dioxo-1H,10aH,11H,11aH-cyclopenta[b]anthracen-6-olate + CO + NADP(+) + H2O. Its activity is regulated as follows. Inhibited by anhydrotetracycline. In terms of biological role, an FAD-requiring monooxygenase active on tetracycline antibiotic and some of its derivatives, which leads to their inactivation. Expression in E.coli confers high resistance to tetracycline and oxytetracycline, does not confer resistance to minocycline or tigecycline. The reaction requires NADPH. Expression in L.pneumophila confers resistance to tetracycline. Degrades and confers resistance to tetracycline and chlortetracycline. The polypeptide is Flavin-dependent monooxygenase (tet(56)) (Legionella longbeachae serogroup 1 (strain NSW150)).